A 365-amino-acid polypeptide reads, in one-letter code: Keratin-associated protein 10-6 (365 aa).

A run of 29 repeats spans residues 41-45, 46-50, 67-71, 89-93, 99-103, 109-113, 114-118, 119-123, 124-128, 129-133, 135-139, 145-149, 155-159, 160-164, 172-176, 186-190, 208-212, 218-222, 228-232, 233-237, 238-242, 250-254, 260-264, 270-274, 282-286, 292-296, 297-301, 316-320, and 334-338. The 29 X 5 AA repeats of C-C-X(3) stretch occupies residues 41-338; that stretch reads CCEPPCCAPA…SCQPSCCRTA (298 aa).

Belongs to the KRTAP type 10 family. In terms of assembly, interacts with hair keratins. As to expression, restricted to a narrow region of the hair fiber cuticle, lying approximately 20 cell layers above the apex of the dermal papilla of the hair root; not detected in any other tissues.

Its function is as follows. In the hair cortex, hair keratin intermediate filaments are embedded in an interfilamentous matrix, consisting of hair keratin-associated proteins (KRTAP), which are essential for the formation of a rigid and resistant hair shaft through their extensive disulfide bond cross-linking with abundant cysteine residues of hair keratins. The matrix proteins include the high-sulfur and high-glycine-tyrosine keratins. In Homo sapiens (Human), this protein is Keratin-associated protein 10-6 (KRTAP10-6).